Reading from the N-terminus, the 760-residue chain is Acetyl-CoA decarbonylase/synthase complex subunit alpha 1 (760 aa).

[4Fe-4S] cluster-binding residues include Cys56, Cys59, Cys60, Cys62, Cys67, and Cys77. His100 is a CO binding site. Positions 231, 259, and 298 each coordinate [Ni-4Fe-4S] cluster. 4Fe-4S ferredoxin-type domains are found at residues 381–410 (KKLQ…VEAM) and 418–450 (FEGL…MIED). Residues Cys390, Cys393, Cys396, Cys400, Cys428, Cys431, Cys434, and Cys438 each contribute to the [4Fe-4S] cluster site. Residues Cys496, Cys525, and Cys560 each coordinate [Ni-4Fe-4S] cluster.

The protein belongs to the Ni-containing carbon monoxide dehydrogenase family. In terms of assembly, heterotetramer of two alpha and two epsilon subunits. The ACDS complex is made up of alpha, epsilon, beta, gamma and delta subunits with a probable stoichiometry of (alpha(2)epsilon(2))(4)-beta(8)-(gamma(1)delta(1))(8). The cofactor is [4Fe-4S] cluster. [Ni-4Fe-4S] cluster serves as cofactor.

It carries out the reaction CO + 2 oxidized [2Fe-2S]-[ferredoxin] + H2O = 2 reduced [2Fe-2S]-[ferredoxin] + CO2 + 2 H(+). Part of the ACDS complex that catalyzes the reversible cleavage of acetyl-CoA, allowing autotrophic growth from CO(2). The alpha-epsilon subcomponent functions as a carbon monoxide dehydrogenase. In Methanopyrus kandleri (strain AV19 / DSM 6324 / JCM 9639 / NBRC 100938), this protein is Acetyl-CoA decarbonylase/synthase complex subunit alpha 1.